Reading from the N-terminus, the 344-residue chain is DNA-directed RNA polymerase subunit alpha (344 aa).

The interval 1 to 238 (MKVIKTAPLI…KQLGVFGERP (238 aa)) is alpha N-terminal domain (alpha-NTD). Residues 253-344 (DAKDLSAKIE…EKLEDKGGND (92 aa)) are alpha C-terminal domain (alpha-CTD).

The protein belongs to the RNA polymerase alpha chain family. Homodimer. The RNAP catalytic core consists of 2 alpha, 1 beta, 1 beta' and 1 omega subunit. When a sigma factor is associated with the core the holoenzyme is formed, which can initiate transcription.

It catalyses the reaction RNA(n) + a ribonucleoside 5'-triphosphate = RNA(n+1) + diphosphate. Its function is as follows. DNA-dependent RNA polymerase catalyzes the transcription of DNA into RNA using the four ribonucleoside triphosphates as substrates. The protein is DNA-directed RNA polymerase subunit alpha of Helicobacter pylori (strain HPAG1).